A 315-amino-acid polypeptide reads, in one-letter code: Petrobactin import system permease protein YclO (315 aa).

The next 9 membrane-spanning stretches (helical) occupy residues 7-27 (IALL…YDLG), 40-60 (VAAI…FQTI), 76-96 (LYML…MVIM), 100-120 (INFI…YQIM), 128-148 (IFFL…LSSF), 172-192 (INTD…VYVW), 223-243 (LIVV…IMFL), 262-282 (YLIA…QFVV), and 288-308 (FSTT…IYLL).

This sequence belongs to the binding-protein-dependent transport system permease family. FecCD subfamily. The complex is composed of two ATP-binding proteins (YclP), two transmembrane proteins (YclN and YclO) and a solute-binding protein (YclQ).

Its subcellular location is the cell membrane. Its function is as follows. Part of the ABC transporter complex YclNOPQ involved in uptake of ferric-petrobactin. Petrobactin is a photoreactive 3,4-catecholate siderophore produced by many members of the B.cereus group, including B.anthracis. Probably responsible for the translocation of the substrate across the membrane. The chain is Petrobactin import system permease protein YclO (yclO) from Bacillus subtilis (strain 168).